A 572-amino-acid chain; its full sequence is DBH-like monooxygenase protein 2 homolog (572 aa).

The signal sequence occupies residues 1–26 (MGTCLKGNMSVLSLVLFLLSVQQFWA). N-linked (GlcNAc...) asparagine glycosylation is found at asparagine 8, asparagine 64, asparagine 187, and asparagine 203. At 27 to 552 (QEDPLLPFSE…SPPEPCVRAC (526 aa)) the chain is on the extracellular side. Positions 42-157 (HNVQLKWGFD…LPMKLIYAYG (116 aa)) constitute a DOMON domain. Tyrosine 207 is an active-site residue. 2 cysteine pairs are disulfide-bonded: cysteine 209–cysteine 256 and cysteine 244–cysteine 263. Cu cation is bound by residues histidine 237 and histidine 238. Position 301 (histidine 301) interacts with Cu cation. Asparagine 306 carries an N-linked (GlcNAc...) asparagine glycan. Cystine bridges form between cysteine 358-cysteine 472 and cysteine 435-cysteine 457. Residue histidine 381 is part of the active site. Histidine 381, histidine 383, and methionine 456 together coordinate Cu cation. 4 N-linked (GlcNAc...) asparagine glycosylation sites follow: asparagine 468, asparagine 503, asparagine 518, and asparagine 534. Residues 553 to 571 (ATKNLAFMSLFLCLAGMWA) form a helical membrane-spanning segment. Serine 572 is a topological domain (cytoplasmic).

Belongs to the copper type II ascorbate-dependent monooxygenase family. The cofactor is Cu(2+).

The protein resides in the membrane. The chain is DBH-like monooxygenase protein 2 homolog (moxd2) from Danio rerio (Zebrafish).